The chain runs to 285 residues: Hydroxyacylglutathione hydrolase, mitochondrial (285 aa).

A mitochondrion-targeting transit peptide spans 1 to 10; the sequence is MKFLLQQIRN. Residues histidine 69, histidine 71, aspartate 73, histidine 74, histidine 131, aspartate 154, and histidine 198 each contribute to the Zn(2+) site.

Zn(2+) is required as a cofactor.

It is found in the mitochondrion matrix. The enzyme catalyses an S-(2-hydroxyacyl)glutathione + H2O = a 2-hydroxy carboxylate + glutathione + H(+). It catalyses the reaction (R)-S-lactoylglutathione + H2O = (R)-lactate + glutathione + H(+). Its pathway is secondary metabolite metabolism; methylglyoxal degradation; (R)-lactate from methylglyoxal: step 2/2. Its activity is regulated as follows. Inhibited by various thiol compounds such as glutathione and coenzyme A. Thiolesterase that catalyzes the hydrolysis of S-D-lactoylglutathione to form glutathione and D-lactic acid. Involved in the metabolism of methylglyoxal, a toxic compound for yeast proliferation, by converting methylglyoxal to lactate via S-D-lactoylglutathione by sequential enzyme reactions catalyzed by glyoxalase I and glyoxalase II. The protein is Hydroxyacylglutathione hydrolase, mitochondrial of Saccharomyces cerevisiae (strain ATCC 204508 / S288c) (Baker's yeast).